The chain runs to 275 residues: Membrane protein insertase MisCB (275 aa).

The N-terminal stretch at 1–18 is a signal peptide; sequence MLKTYQKLLAMGIFLIVL. A lipid anchor (N-palmitoyl cysteine) is attached at Cys-19. Cys-19 carries the S-diacylglycerol cysteine lipid modification. 5 consecutive transmembrane segments (helical) span residues 63–83, 139–159, 172–192, 219–239, and 240–260; these read YGLSIILVTIIVRIVVLPLFV, AMGCLPMLIQSPIMIGLYYAI, WFSLGQSDILMSLSAGIMYFV, LMVFIFPVMMTIFSLNVPAAL, and PLYWFTSGLFLTVQNIVLQMT.

The protein belongs to the OXA1/ALB3/YidC family. Type 2 subfamily. In terms of assembly, mostly monomeric, it may also form dimers. Interacts with SpoIIIAE. Forms a complex with the F(1)F(0) ATP synthase in which can be found the alpha, beta, gamma, delta and epsilon subunits of F(1) and a, b and subunits of F(0). YqgA is found in the same complex.

Its subcellular location is the cell membrane. In terms of biological role, required for the insertion and/or proper folding and/or complex formation of integral membrane proteins into the membrane. Involved in integration of membrane proteins that insert both dependently and independently of the Sec translocase complex, as well as at least some lipoproteins. Also involved in protein secretion processes. It has an overlapping, although partly distinct, function compared to SpoIIIJ(MisCB). This is Membrane protein insertase MisCB (misCB) from Bacillus subtilis (strain 168).